The sequence spans 1369 residues: Rho-associated protein kinase 1 (1369 aa).

Ser2 bears the N-acetylserine mark. The Protein kinase domain occupies 76-338; the sequence is YEVVKVIGRG…VEEIKRHLFF (263 aa). ATP is bound by residues 82–90 and Lys105; that span reads IGRGAFGEV. Asp198 (proton acceptor) is an active-site residue. Positions 341–409 constitute an AGC-kinase C-terminal domain; it reads DQWAWETLRD…YSNRRYLPSA (69 aa). The interaction with FHOD1 stretch occupies residues 368–727; it reads FDDLEEDKGD…KKLKEEREAR (360 aa). Positions 422–692 form a coiled coil; that stretch reads KNVQESLQKT…RLEQEVNEHK (271 aa). One can recognise an REM-1 domain in the interval 479-556; that stretch reads SAVSQIEKEK…LEEANDLLRT (78 aa). Residues 707-946 form an SHROOM3 binding region; that stretch reads EAKSVAMCEM…TVSRLEEANN (240 aa). In terms of domain architecture, RhoBD spans 949–1015; it reads TKDIELLRKE…LAEIMNRKDF (67 aa). The tract at residues 998-1010 is RHOA binding; that stretch reads LKTQAVNKLAEIM. Positions 1011-1102 form a coiled coil; that stretch reads NRKDFKIDRK…KLLDLSDSTS (92 aa). Phosphoserine occurs at positions 1105 and 1108. An auto-inhibitory region spans residues 1115–1369; the sequence is NLPVGSACIP…VVKNTSGKTS (255 aa). The 200-residue stretch at 1133-1332 folds into the PH domain; it reads SSRIEGWLSV…WVTHLVKKIP (200 aa). The segment at 1243–1298 adopts a Phorbol-ester/DAG-type zinc-finger fold; sequence GHEFIPTLYHFPANCEACAKPLWHVFKPPPALECRRCHVKSHRDHLDKKEDLIPPC. Ser1343 carries the post-translational modification Phosphoserine.

It belongs to the protein kinase superfamily. AGC Ser/Thr protein kinase family. In terms of assembly, homodimer. Interacts with GEM, MYLC2B, RHOE, LIMK1, LIMK2, TSG101, CHORDC1, DAPK3, PFN1, PTEN and JIP3. Interacts with FHOD1 in a Src-dependent manner. Interacts with ITGB1BP1 (via N-terminus and PTB domain). Interacts with RHOA (activated by GTP), RHOB, RHOC and PPP1R12A. Interacts with SHROOM3. Requires Mg(2+) as cofactor. Post-translationally, autophosphorylated on serine and threonine residues. In terms of processing, cleaved by caspase-3 during apoptosis. This leads to constitutive activation of the kinase and membrane blebbing. As to expression, highly expressed in brain, spleen, lung, liver, skeletal muscle, kidney and testis.

The protein resides in the cytoplasm. Its subcellular location is the cytoskeleton. It is found in the microtubule organizing center. It localises to the centrosome. The protein localises to the centriole. The protein resides in the golgi apparatus membrane. Its subcellular location is the cell projection. It is found in the bleb. It localises to the cell membrane. The protein localises to the lamellipodium. The protein resides in the ruffle. It catalyses the reaction L-seryl-[protein] + ATP = O-phospho-L-seryl-[protein] + ADP + H(+). It carries out the reaction L-threonyl-[protein] + ATP = O-phospho-L-threonyl-[protein] + ADP + H(+). Activated by RHOA binding. Inhibited by Y-27632. In terms of biological role, protein kinase which is a key regulator of the actin cytoskeleton and cell polarity. Involved in regulation of smooth muscle contraction, actin cytoskeleton organization, stress fiber and focal adhesion formation, neurite retraction, cell adhesion and motility via phosphorylation of DAPK3, GFAP, LIMK1, LIMK2, MYL9/MLC2, TPPP, PFN1 and PPP1R12A. Phosphorylates FHOD1 and acts synergistically with it to promote SRC-dependent non-apoptotic plasma membrane blebbing. Phosphorylates JIP3 and regulates the recruitment of JNK to JIP3 upon UVB-induced stress. Acts as a suppressor of inflammatory cell migration by regulating PTEN phosphorylation and stability. Acts as a negative regulator of VEGF-induced angiogenic endothelial cell activation. Required for centrosome positioning and centrosome-dependent exit from mitosis. Plays a role in terminal erythroid differentiation. Inhibits podocyte motility via regulation of actin cytoskeletal dynamics and phosphorylation of CFL1. Promotes keratinocyte terminal differentiation. Involved in osteoblast compaction through the fibronectin fibrillogenesis cell-mediated matrix assembly process, essential for osteoblast mineralization. May regulate closure of the eyelids and ventral body wall by inducing the assembly of actomyosin bundles. This Rattus norvegicus (Rat) protein is Rho-associated protein kinase 1 (Rock1).